Here is a 499-residue protein sequence, read N- to C-terminus: Cobyric acid synthase (499 aa).

The GATase cobBQ-type domain occupies 246–441; it reads PIDIAIIKLP…IHGIFDGAEL (196 aa). The active-site Nucleophile is the Cys-327. The active site involves His-433.

Belongs to the CobB/CobQ family. CobQ subfamily.

It participates in cofactor biosynthesis; adenosylcobalamin biosynthesis. Its function is as follows. Catalyzes amidations at positions B, D, E, and G on adenosylcobyrinic A,C-diamide. NH(2) groups are provided by glutamine, and one molecule of ATP is hydrogenolyzed for each amidation. The protein is Cobyric acid synthase of Clostridium kluyveri (strain NBRC 12016).